The sequence spans 801 residues: MSTEPTIHDSIDTAATTVGSLWPIHSFVTANPLAGFEDQPFSEAVTQAADLLGGRGYPSTRTFRAALQRGQIDPEILDAELSEAGYEKEPEILLDRMAEATDAADSDSDTATDHVDQVLTKWLSAFLDEGSAHWSMPNREAGFYAAFRGVAEHDSEIPDAGIIAELPESPIETIETVLASHPENQWVPIFEEQLAALPGWTGLIKQRADDEGAWQSTYPISLVGYLAARLALLDAVGAALAPSNDSIDPDPAAELAGAFLRAWEASYRGDLVETVAAESQSLADSDSSGRPDAQMVFCIDTRSEIIRRHIEATGDYETHGYAGFFGIPMEYQGYDTDVSVDACPPILDPQHHVTDVPIDDDTQESHDRWSGIRDTADEIIETLEANAATAYGFVETAGSGYGLALAARTLVPGRVQDLFDAAGRSVPDDHEFCDPLVHHQHTYTGDLPVGLTTDEKVEYAATAFDLMGWEAFSRLVVFTGHASETTNNPYDSSLDCGACAGNPGGPNARVLATICNDTEVQSALRDRGFEIPEDTVFMAGEHNTTTDEVELYDSEVPESHADDLKQLRANLATARENAAAERAESMGSDASSGVSETQRRAADWAETRPEWGLAGNAGFVIGPRELTSDVDLDGRAFLHSYDWSTDPDGEALEAILTGPMVVTQWINTQYYFSTVDNAVYGSGSKVTHNPVGNVGVYQGNGGDLMTGLPLQSLMAADDDPHHQPLRLSTVIHAPVDRVTDVLADHAELATLLDNNWLSLTVVDPTQDHHAFEYERDLEWSTVSEVSEADPAEPTATAVADD.

Cys298, Asp300, His481, and Cys496 together coordinate Zn(2+). The interval 575–596 (RENAAAERAESMGSDASSGVSE) is disordered.

Belongs to the inorganic carbon transporter (TC 9.A.2) DabA family. Forms a complex with DabB. The cofactor is Zn(2+).

The protein resides in the cell membrane. Its function is as follows. Part of an energy-coupled inorganic carbon pump. This Haloarcula marismortui (strain ATCC 43049 / DSM 3752 / JCM 8966 / VKM B-1809) (Halobacterium marismortui) protein is Probable inorganic carbon transporter subunit DabA.